A 234-amino-acid chain; its full sequence is LexA repressor (234 aa).

Residues 26 to 46 (FDEMKTALELTSKSGIHRLIT) constitute a DNA-binding region (H-T-H motif). Active-site for autocatalytic cleavage activity residues include Ser155 and Lys193.

It belongs to the peptidase S24 family. As to quaternary structure, homodimer.

The enzyme catalyses Hydrolysis of Ala-|-Gly bond in repressor LexA.. In terms of biological role, represses a number of genes involved in the response to DNA damage (SOS response), including recA and lexA. In the presence of single-stranded DNA, RecA interacts with LexA causing an autocatalytic cleavage which disrupts the DNA-binding part of LexA, leading to derepression of the SOS regulon and eventually DNA repair. The chain is LexA repressor from Bartonella henselae (strain ATCC 49882 / DSM 28221 / CCUG 30454 / Houston 1) (Rochalimaea henselae).